The primary structure comprises 337 residues: Lipoyl synthase (337 aa).

[4Fe-4S] cluster-binding residues include cysteine 81, cysteine 86, cysteine 92, cysteine 107, cysteine 111, cysteine 114, and serine 323. One can recognise a Radical SAM core domain in the interval 93–312; it reads FSHGTATFMI…EDYGNALGFS (220 aa).

This sequence belongs to the radical SAM superfamily. Lipoyl synthase family. [4Fe-4S] cluster is required as a cofactor.

The protein resides in the cytoplasm. The catalysed reaction is [[Fe-S] cluster scaffold protein carrying a second [4Fe-4S](2+) cluster] + N(6)-octanoyl-L-lysyl-[protein] + 2 oxidized [2Fe-2S]-[ferredoxin] + 2 S-adenosyl-L-methionine + 4 H(+) = [[Fe-S] cluster scaffold protein] + N(6)-[(R)-dihydrolipoyl]-L-lysyl-[protein] + 4 Fe(3+) + 2 hydrogen sulfide + 2 5'-deoxyadenosine + 2 L-methionine + 2 reduced [2Fe-2S]-[ferredoxin]. It functions in the pathway protein modification; protein lipoylation via endogenous pathway; protein N(6)-(lipoyl)lysine from octanoyl-[acyl-carrier-protein]: step 2/2. Functionally, catalyzes the radical-mediated insertion of two sulfur atoms into the C-6 and C-8 positions of the octanoyl moiety bound to the lipoyl domains of lipoate-dependent enzymes, thereby converting the octanoylated domains into lipoylated derivatives. This Xanthomonas euvesicatoria pv. vesicatoria (strain 85-10) (Xanthomonas campestris pv. vesicatoria) protein is Lipoyl synthase.